The chain runs to 202 residues: FMN-dependent NADH:quinone oxidoreductase 2 (202 aa).

Residues serine 9, 15–17 (SAS), and 95–98 (MWNL) each bind FMN.

The protein belongs to the azoreductase type 1 family. In terms of assembly, homodimer. Requires FMN as cofactor.

It carries out the reaction 2 a quinone + NADH + H(+) = 2 a 1,4-benzosemiquinone + NAD(+). The enzyme catalyses N,N-dimethyl-1,4-phenylenediamine + anthranilate + 2 NAD(+) = 2-(4-dimethylaminophenyl)diazenylbenzoate + 2 NADH + 2 H(+). Functionally, quinone reductase that provides resistance to thiol-specific stress caused by electrophilic quinones. Its function is as follows. Also exhibits azoreductase activity. Catalyzes the reductive cleavage of the azo bond in aromatic azo compounds to the corresponding amines. This chain is FMN-dependent NADH:quinone oxidoreductase 2, found in Hahella chejuensis (strain KCTC 2396).